The primary structure comprises 207 residues: Large ribosomal subunit protein bL25 (207 aa).

This sequence belongs to the bacterial ribosomal protein bL25 family. CTC subfamily. In terms of assembly, part of the 50S ribosomal subunit; part of the 5S rRNA/L5/L18/L25 subcomplex. Contacts the 5S rRNA. Binds to the 5S rRNA independently of L5 and L18.

Its function is as follows. This is one of the proteins that binds to the 5S RNA in the ribosome where it forms part of the central protuberance. The protein is Large ribosomal subunit protein bL25 of Orientia tsutsugamushi (strain Ikeda) (Rickettsia tsutsugamushi).